We begin with the raw amino-acid sequence, 530 residues long: Bifunctional purine biosynthesis protein PurH (530 aa).

In terms of domain architecture, MGS-like spans 1-148; sequence MNNARPIRRA…KNHKDVTIVV (148 aa).

This sequence belongs to the PurH family.

The enzyme catalyses (6R)-10-formyltetrahydrofolate + 5-amino-1-(5-phospho-beta-D-ribosyl)imidazole-4-carboxamide = 5-formamido-1-(5-phospho-D-ribosyl)imidazole-4-carboxamide + (6S)-5,6,7,8-tetrahydrofolate. It carries out the reaction IMP + H2O = 5-formamido-1-(5-phospho-D-ribosyl)imidazole-4-carboxamide. It participates in purine metabolism; IMP biosynthesis via de novo pathway; 5-formamido-1-(5-phospho-D-ribosyl)imidazole-4-carboxamide from 5-amino-1-(5-phospho-D-ribosyl)imidazole-4-carboxamide (10-formyl THF route): step 1/1. Its pathway is purine metabolism; IMP biosynthesis via de novo pathway; IMP from 5-formamido-1-(5-phospho-D-ribosyl)imidazole-4-carboxamide: step 1/1. The protein is Bifunctional purine biosynthesis protein PurH of Aliivibrio fischeri (strain ATCC 700601 / ES114) (Vibrio fischeri).